The chain runs to 173 residues: MKRVLYPGTFDPITLGHVDVISKAARLFDEVVVGVAAQTPKETLFELEERMELVERTLKHFSFSNAIALPYTGLTVDFAKELNCCAIIRGLRAVSDFETEFQLALMNRRLKPEIETLFLMPEDNHIYLSSSLVKEISRLGGEISAFVPTVVMEALKQKIGKRNSNPVAISRPR.

Thr9 is a binding site for substrate. Residues 9-10 and His17 each bind ATP; that span reads TF. Substrate is bound by residues Lys41, Thr75, and Arg89. ATP contacts are provided by residues 90-92, Glu100, and 125-131; these read GLR and HIYLSSS.

This sequence belongs to the bacterial CoaD family. Homohexamer. It depends on Mg(2+) as a cofactor.

Its subcellular location is the cytoplasm. The catalysed reaction is (R)-4'-phosphopantetheine + ATP + H(+) = 3'-dephospho-CoA + diphosphate. It functions in the pathway cofactor biosynthesis; coenzyme A biosynthesis; CoA from (R)-pantothenate: step 4/5. In terms of biological role, reversibly transfers an adenylyl group from ATP to 4'-phosphopantetheine, yielding dephospho-CoA (dPCoA) and pyrophosphate. The sequence is that of Phosphopantetheine adenylyltransferase from Methylacidiphilum infernorum (isolate V4) (Methylokorus infernorum (strain V4)).